The sequence spans 244 residues: MRTIKLTIEYDGTNYAGWQVQPNGLAVQQVLEEALLRLLGERVRLRSSGRTDAGVHARAMVASFTTSRSLPLQAFVGGANRFLPDDIAILSAAEAAPEFRPIQDARSKWYRYTIYNAPVRSPLRRLFSWHVREPLDTDAMQLAAHHFPGRHDFAAFRASNCAAKTTLRRIDSVTIASEGELIVIDVIGEGFLKNMVRVMAGTLVDVGRGRFEPERVAWLLENPDRKKAGVTAPACGLCLMDVSY.

Aspartate 52 serves as the catalytic Nucleophile. Tyrosine 110 serves as a coordination point for substrate.

The protein belongs to the tRNA pseudouridine synthase TruA family. As to quaternary structure, homodimer.

It carries out the reaction uridine(38/39/40) in tRNA = pseudouridine(38/39/40) in tRNA. Formation of pseudouridine at positions 38, 39 and 40 in the anticodon stem and loop of transfer RNAs. The protein is tRNA pseudouridine synthase A of Pelobacter propionicus (strain DSM 2379 / NBRC 103807 / OttBd1).